A 405-amino-acid chain; its full sequence is Probable tRNA sulfurtransferase (405 aa).

In terms of domain architecture, THUMP spans 60–165 (VPVAESLKQI…EEAAYLSYEN (106 aa)). ATP is bound by residues 183–184 (ML), 208–209 (HF), arginine 265, glycine 287, and glutamine 296.

This sequence belongs to the ThiI family.

The protein resides in the cytoplasm. The enzyme catalyses [ThiI sulfur-carrier protein]-S-sulfanyl-L-cysteine + a uridine in tRNA + 2 reduced [2Fe-2S]-[ferredoxin] + ATP + H(+) = [ThiI sulfur-carrier protein]-L-cysteine + a 4-thiouridine in tRNA + 2 oxidized [2Fe-2S]-[ferredoxin] + AMP + diphosphate. It carries out the reaction [ThiS sulfur-carrier protein]-C-terminal Gly-Gly-AMP + S-sulfanyl-L-cysteinyl-[cysteine desulfurase] + AH2 = [ThiS sulfur-carrier protein]-C-terminal-Gly-aminoethanethioate + L-cysteinyl-[cysteine desulfurase] + A + AMP + 2 H(+). It participates in cofactor biosynthesis; thiamine diphosphate biosynthesis. In terms of biological role, catalyzes the ATP-dependent transfer of a sulfur to tRNA to produce 4-thiouridine in position 8 of tRNAs, which functions as a near-UV photosensor. Also catalyzes the transfer of sulfur to the sulfur carrier protein ThiS, forming ThiS-thiocarboxylate. This is a step in the synthesis of thiazole, in the thiamine biosynthesis pathway. The sulfur is donated as persulfide by IscS. This Streptococcus mutans serotype c (strain ATCC 700610 / UA159) protein is Probable tRNA sulfurtransferase.